A 342-amino-acid chain; its full sequence is Endoplasmic reticulum junction formation protein lunapark-1 (342 aa).

Over 1–39 (MGNLFSRNKSPATELERVALSIDDLKKRLQTISSSNTNT) the chain is Cytoplasmic. Positions 13 to 34 (TELERVALSIDDLKKRLQTISS) form a coiled coil. Residues 40–60 (LYYYYMSIVVILSIAMAHTWL) form a helical membrane-spanning segment. Residues 61–68 (RFEDPQKT) lie on the Lumenal side of the membrane. The helical transmembrane segment at 69 to 89 (YVACALMLGAIGIVLAGRYVI) threads the bilayer. At 90 to 342 (NGFFSWRTNR…ESKTMETEFH (253 aa)) the chain is on the cytoplasmic side. Positions 102-136 (QKLENAISQKTTLLDLVKETLKFKEAKEILDRYEK) form a coiled coil. The disordered stretch occupies residues 161 to 191 (ADSSMFATPKQEQKRVETPTAQGPNSAMNSM). Residues 179 to 191 (PTAQGPNSAMNSM) are compositionally biased toward polar residues. The segment at 236-261 (CSICHTHNGMSTPAEYPYISFRCFEC) adopts a C4-type; plays a role in ER morphology zinc-finger fold. Residues 278 to 342 (RPPMGPKGIQ…ESKTMETEFH (65 aa)) form a disordered region. Residues 295–321 (SENTHNMMENQKPSTDLTPSASQNGSE) show a composition bias toward polar residues. A compositionally biased stretch (basic and acidic residues) spans 322 to 342 (KGSDSENEKVPESKTMETEFH).

Belongs to the lunapark family. Expressed in cell bodies along the ventral cord around the pharynx and the tail both in larvae and adults. Also expressed in muscles and hypodermal cells.

The protein resides in the endoplasmic reticulum membrane. Functionally, plays a role in tubular endoplasmic reticulum network formation and maintenance. May be involved in central nervous system development. Has a presynaptic role in neurotransmission. Likely to operate in synaptogenesis by regulating vesicular transport or localization. Required for correct localization of rab-3 and snb-1. The protein is Endoplasmic reticulum junction formation protein lunapark-1 (lnp-1) of Caenorhabditis elegans.